Reading from the N-terminus, the 568-residue chain is DNA mismatch repair protein MutL (568 aa).

It belongs to the DNA mismatch repair MutL/HexB family.

This protein is involved in the repair of mismatches in DNA. It is required for dam-dependent methyl-directed DNA mismatch repair. May act as a 'molecular matchmaker', a protein that promotes the formation of a stable complex between two or more DNA-binding proteins in an ATP-dependent manner without itself being part of a final effector complex. The sequence is that of DNA mismatch repair protein MutL from Nostoc punctiforme (strain ATCC 29133 / PCC 73102).